An 86-amino-acid chain; its full sequence is Small ribosomal subunit protein uS17 (86 aa).

Belongs to the universal ribosomal protein uS17 family. Part of the 30S ribosomal subunit.

One of the primary rRNA binding proteins, it binds specifically to the 5'-end of 16S ribosomal RNA. The sequence is that of Small ribosomal subunit protein uS17 from Desulfitobacterium hafniense (strain DSM 10664 / DCB-2).